The primary structure comprises 956 residues: Glycine dehydrogenase (decarboxylating) 2 (956 aa).

N6-(pyridoxal phosphate)lysine is present on K706.

This sequence belongs to the GcvP family. The glycine cleavage system is composed of four proteins: P, T, L and H. Pyridoxal 5'-phosphate is required as a cofactor.

It carries out the reaction N(6)-[(R)-lipoyl]-L-lysyl-[glycine-cleavage complex H protein] + glycine + H(+) = N(6)-[(R)-S(8)-aminomethyldihydrolipoyl]-L-lysyl-[glycine-cleavage complex H protein] + CO2. The glycine cleavage system catalyzes the degradation of glycine. The P protein binds the alpha-amino group of glycine through its pyridoxal phosphate cofactor; CO(2) is released and the remaining methylamine moiety is then transferred to the lipoamide cofactor of the H protein. This Colwellia psychrerythraea (strain 34H / ATCC BAA-681) (Vibrio psychroerythus) protein is Glycine dehydrogenase (decarboxylating) 2.